The chain runs to 627 residues: Neuronal acetylcholine receptor subunit alpha-4 (627 aa).

The N-terminal stretch at Met1–Pro31 is a signal peptide. At Val32–Leu244 the chain is on the extracellular side. N-linked (GlcNAc...) asparagine glycosylation occurs at Asn59. Residues Val78 and Glu80 each coordinate Ca(2+). N-linked (GlcNAc...) asparagine glycans are attached at residues Asn109 and Asn176. 2 cysteine pairs are disulfide-bonded: Cys163–Cys177 and Cys227–Cys228. Residues Pro245–Leu269 traverse the membrane as a helical segment. Cys273 is lipidated: S-palmitoyl cysteine. The next 2 helical transmembrane spans lie at Val277 to Thr295 and Tyr311 to Val332. The Cytoplasmic segment spans residues His333 to Arg600. A compositionally biased stretch (low complexity) spans Pro384–Gly399. The disordered stretch occupies residues Pro384–Leu463. Phosphoserine is present on Ser427. Residues Ser444–Thr458 are compositionally biased toward pro residues. Ser541 carries the post-translational modification Phosphoserine. The helical transmembrane segment at Ile601–Leu619 threads the bilayer.

This sequence belongs to the ligand-gated ion channel (TC 1.A.9) family. Acetylcholine receptor (TC 1.A.9.1) subfamily. Alpha-4/CHRNA4 sub-subfamily. In terms of assembly, neuronal AChR is composed of two different types of subunits: alpha and beta. CHRNA4 forms heteropentameric neuronal acetylcholine receptors with CHRNB2 and CHRNB4, as well as CHRNA5 and CHRNB3 as accesory subunits. Found in two major stoichiometric forms, LS (low agonist sensitivity): (CHRNA4)3:(CHRNB2)2 and HS (high agonist sensitivity): (CHRNA4)2:(CHRNB2)3, the two stoichiometric forms differ in their unitary conductance, calcium permeability, ACh sensitivity and potentiation by divalent cation. Cells produce predominantly an (CHRNA4)3:(CHRNB2)2 nAChR. The (CHRNA4)2:(CHRNB2)3 expression is selectively up-regulated by nicotine and has lower single channel conductance and calcium permeability. In the striatum, also forms CHRNA4:CHRNA6:CHRNB2 complexes. Also found in the stoichiometric form: (CHRNA4:CHRNB2)2:CHRNB3. Interacts with RIC3; which is required for proper folding and assembly. Interacts with LYPD6.

The protein localises to the synaptic cell membrane. It localises to the cell membrane. It catalyses the reaction Ca(2+)(in) = Ca(2+)(out). It carries out the reaction K(+)(in) = K(+)(out). The catalysed reaction is Na(+)(in) = Na(+)(out). Its activity is regulated as follows. Activated by a myriad of ligands such as acetylcholine, cytisine, nicotine, choline and epibatidine. Channel potentiation by calcium is stoichiometry-selective, CHRNA4:CHRNB2 nACh receptor is achieved by calcium association with topographically distinct sites framed by anionic residues within the CHRNA4 subunit and between the CHRNA4 and CHRNB2 subunits. nAChR activity is inhibited by the antagonist alpha-conotoxins BuIA, PnIA, GID and MII, small disulfide-constrained peptides from cone snails. In terms of biological role, component of neuronal acetylcholine receptors (nAChRs) that function as pentameric, ligand-gated cation channels with high calcium permeability among other activities. nAChRs are excitatory neurotrasnmitter receptors formed by a collection of nAChR subunits known to mediate synaptic transmission in the nervous system and the neuromuscular junction. Each nAchR subunit confers differential attributes to channel properties, including activation, deactivation and desensitization kinetics, pH sensitivity, cation permeability, and binding to allosteric modulators. CHRNA4 forms heteropentameric neuronal acetylcholine receptors with CHRNB2 and CHRNB4, as well as CHRNA5 and CHRNB3 as accesory subunits. Is the most abundant nAChR subtype expressed in the central nervous system. Found in two major stoichiometric forms,(CHRNA4)3:(CHRNB2)2 and (CHRNA4)2:(CHRNB2)3, the two stoichiometric forms differ in their unitary conductance, calcium permeability, ACh sensitivity and potentiation by divalent cation. Involved in the modulation of calcium-dependent signaling pathways, influences the release of neurotransmitters, including dopamine, glutamate and GABA. The sequence is that of Neuronal acetylcholine receptor subunit alpha-4 (CHRNA4) from Mustela putorius furo (European domestic ferret).